Reading from the N-terminus, the 513-residue chain is Putative thymidine phosphorylase (513 aa).

It belongs to the thymidine/pyrimidine-nucleoside phosphorylase family. Type 2 subfamily.

The catalysed reaction is thymidine + phosphate = 2-deoxy-alpha-D-ribose 1-phosphate + thymine. This chain is Putative thymidine phosphorylase, found in Rhodopseudomonas palustris (strain BisA53).